Here is a 313-residue protein sequence, read N- to C-terminus: 3'-5' exoribonuclease YhaM (313 aa).

Positions 163-279 constitute an HD domain; that stretch reads HVVSMLRLAK…LHQIDLMDAS (117 aa).

It belongs to the YhaM family.

Its function is as follows. Shows a 3'-5' exoribonuclease activity. This Listeria welshimeri serovar 6b (strain ATCC 35897 / DSM 20650 / CCUG 15529 / CIP 8149 / NCTC 11857 / SLCC 5334 / V8) protein is 3'-5' exoribonuclease YhaM.